We begin with the raw amino-acid sequence, 416 residues long: MNQESISQSIAIVHPITLSHGRNAEVWDTDGKRYIDFVGGIGVLNLGHCNPAVVEAIQAQATRLTHYAFNAAPHGPYLALMEQLSQFVPVSYPLAGMLTNSGAEAAENALKVARGATGKRAIIAFDGGFHGRTLATLNLNGKVAPYKQRVGELPGPVYHLPYPSADTGVTCEQALKAMDRLFSVELAVEDVAAFIFEPVQGEGGFLALDPAFAQALRRFCDERGILIIIDEIQSGFGRTGQRFAFPRLGIEPDLLLLAKSIAGGMPLGAVVGRKELMAALPKGGLGGTYSGNPISCAAALASLAQMTDENLATWGERQEQAIVSRYERWKASGLSPYIGRLTGVGAMRGIEFANADGSPAPAQLAKVMEAARARGLLLMPSGKARHIIRLLAPLTIEAEVLEEGLDILEQCLAELN.

Pyridoxal 5'-phosphate-binding positions include 102–103 (GA) and Gln-233. Lys-259 is modified (N6-(pyridoxal phosphate)lysine). A pyridoxal 5'-phosphate-binding site is contributed by Thr-288.

The protein belongs to the class-III pyridoxal-phosphate-dependent aminotransferase family. Pyridoxal 5'-phosphate is required as a cofactor.

The catalysed reaction is L-2-aminoadipate + 2-oxoglutarate = 2-oxoadipate + L-glutamate. It carries out the reaction 5-aminopentanoate + 2-oxoglutarate = 5-oxopentanoate + L-glutamate. Its pathway is amino-acid degradation. Catalyzes the conversion of 2-aminoadipate (2AA) to 2-oxoadipate (2OA). Is most active on L-2-aminoadipate (L-2AA) and shows only weak activity on the enantiomer, D-2-aminoadipate (D-2AA). Shows moderate activity on 5-aminovalerate (5AVA) and weak activity toward 4-aminobutyrate (GABA). Is involved in a D-lysine catabolic pathway. The polypeptide is 2-aminoadipate transaminase (Pseudomonas putida (strain ATCC 47054 / DSM 6125 / CFBP 8728 / NCIMB 11950 / KT2440)).